Consider the following 236-residue polypeptide: 5'-methylthioadenosine/S-adenosylhomocysteine nucleosidase (236 aa).

The active-site Proton acceptor is glutamate 12. Substrate is bound by residues glycine 78, isoleucine 153, and 174–175 (ME). Aspartate 198 (proton donor) is an active-site residue.

The protein belongs to the PNP/UDP phosphorylase family. MtnN subfamily.

The catalysed reaction is S-adenosyl-L-homocysteine + H2O = S-(5-deoxy-D-ribos-5-yl)-L-homocysteine + adenine. It catalyses the reaction S-methyl-5'-thioadenosine + H2O = 5-(methylsulfanyl)-D-ribose + adenine. The enzyme catalyses 5'-deoxyadenosine + H2O = 5-deoxy-D-ribose + adenine. It functions in the pathway amino-acid biosynthesis; L-methionine biosynthesis via salvage pathway; S-methyl-5-thio-alpha-D-ribose 1-phosphate from S-methyl-5'-thioadenosine (hydrolase route): step 1/2. Functionally, catalyzes the irreversible cleavage of the glycosidic bond in both 5'-methylthioadenosine (MTA) and S-adenosylhomocysteine (SAH/AdoHcy) to adenine and the corresponding thioribose, 5'-methylthioribose and S-ribosylhomocysteine, respectively. Also cleaves 5'-deoxyadenosine, a toxic by-product of radical S-adenosylmethionine (SAM) enzymes, into 5-deoxyribose and adenine. The sequence is that of 5'-methylthioadenosine/S-adenosylhomocysteine nucleosidase from Shewanella sp. (strain MR-7).